The chain runs to 133 residues: ATP synthase epsilon chain, chloroplastic (133 aa).

It belongs to the ATPase epsilon chain family. F-type ATPases have 2 components, CF(1) - the catalytic core - and CF(0) - the membrane proton channel. CF(1) has five subunits: alpha(3), beta(3), gamma(1), delta(1), epsilon(1). CF(0) has three main subunits: a, b and c.

It is found in the plastid. The protein localises to the chloroplast thylakoid membrane. Produces ATP from ADP in the presence of a proton gradient across the membrane. This is ATP synthase epsilon chain, chloroplastic from Nicotiana sylvestris (Wood tobacco).